The following is a 388-amino-acid chain: Glucose-1-phosphate adenylyltransferase (388 aa).

Alpha-D-glucose 1-phosphate-binding positions include Tyr-100, Gly-165, 180 to 181, and Ser-191; that span reads EK.

Belongs to the bacterial/plant glucose-1-phosphate adenylyltransferase family. Homotetramer.

It carries out the reaction alpha-D-glucose 1-phosphate + ATP + H(+) = ADP-alpha-D-glucose + diphosphate. It functions in the pathway glycan biosynthesis; glycogen biosynthesis. In terms of biological role, involved in the biosynthesis of ADP-glucose, a building block required for the elongation reactions to produce glycogen. Catalyzes the reaction between ATP and alpha-D-glucose 1-phosphate (G1P) to produce pyrophosphate and ADP-Glc. This is Glucose-1-phosphate adenylyltransferase from Clostridium perfringens (strain SM101 / Type A).